Reading from the N-terminus, the 91-residue chain is Acylphosphatase (91 aa).

One can recognise an Acylphosphatase-like domain in the interval C3–Y91. Residues R18 and N36 contribute to the active site.

This sequence belongs to the acylphosphatase family.

The catalysed reaction is an acyl phosphate + H2O = a carboxylate + phosphate + H(+). The chain is Acylphosphatase (acyP) from Dehalococcoides mccartyi (strain ATCC BAA-2266 / KCTC 15142 / 195) (Dehalococcoides ethenogenes (strain 195)).